A 365-amino-acid polypeptide reads, in one-letter code: Aminomethyltransferase (365 aa).

The protein belongs to the GcvT family. As to quaternary structure, the glycine cleavage system is composed of four proteins: P, T, L and H.

It carries out the reaction N(6)-[(R)-S(8)-aminomethyldihydrolipoyl]-L-lysyl-[protein] + (6S)-5,6,7,8-tetrahydrofolate = N(6)-[(R)-dihydrolipoyl]-L-lysyl-[protein] + (6R)-5,10-methylene-5,6,7,8-tetrahydrofolate + NH4(+). The glycine cleavage system catalyzes the degradation of glycine. The polypeptide is Aminomethyltransferase (Natranaerobius thermophilus (strain ATCC BAA-1301 / DSM 18059 / JW/NM-WN-LF)).